The chain runs to 219 residues: Counting factor-associated protein C (219 aa).

The first 16 residues, 1 to 16 (MKVLILLVSLISVCFS), serve as a signal peptide directing secretion. Asparagine 74 and asparagine 123 each carry an N-linked (GlcNAc...) asparagine glycan.

The protein localises to the secreted. The sequence is that of Counting factor-associated protein C (cfaC) from Dictyostelium discoideum (Social amoeba).